The primary structure comprises 400 residues: Argininosuccinate synthase (400 aa).

Ala8–Ser16 serves as a coordination point for ATP. Tyr87 serves as a coordination point for L-citrulline. Gly117 is a binding site for ATP. 3 residues coordinate L-aspartate: Thr119, Asn123, and Asp124. Asn123 serves as a coordination point for L-citrulline. L-citrulline-binding residues include Arg127, Ser175, Glu260, and Tyr272.

This sequence belongs to the argininosuccinate synthase family. Type 1 subfamily. As to quaternary structure, homotetramer.

The protein localises to the cytoplasm. The catalysed reaction is L-citrulline + L-aspartate + ATP = 2-(N(omega)-L-arginino)succinate + AMP + diphosphate + H(+). The protein operates within amino-acid biosynthesis; L-arginine biosynthesis; L-arginine from L-ornithine and carbamoyl phosphate: step 2/3. The chain is Argininosuccinate synthase from Mycolicibacterium vanbaalenii (strain DSM 7251 / JCM 13017 / BCRC 16820 / KCTC 9966 / NRRL B-24157 / PYR-1) (Mycobacterium vanbaalenii).